Consider the following 163-residue polypeptide: ATP synthase subunit b 1 (163 aa).

A helical transmembrane segment spans residues 7–27 (AETWVAIAFVILMGIFAYLGV).

It belongs to the ATPase B chain family. In terms of assembly, F-type ATPases have 2 components, F(1) - the catalytic core - and F(0) - the membrane proton channel. F(1) has five subunits: alpha(3), beta(3), gamma(1), delta(1), epsilon(1). F(0) has three main subunits: a(1), b(2) and c(10-14). The alpha and beta chains form an alternating ring which encloses part of the gamma chain. F(1) is attached to F(0) by a central stalk formed by the gamma and epsilon chains, while a peripheral stalk is formed by the delta and b chains.

Its subcellular location is the cell inner membrane. F(1)F(0) ATP synthase produces ATP from ADP in the presence of a proton or sodium gradient. F-type ATPases consist of two structural domains, F(1) containing the extramembraneous catalytic core and F(0) containing the membrane proton channel, linked together by a central stalk and a peripheral stalk. During catalysis, ATP synthesis in the catalytic domain of F(1) is coupled via a rotary mechanism of the central stalk subunits to proton translocation. In terms of biological role, component of the F(0) channel, it forms part of the peripheral stalk, linking F(1) to F(0). The sequence is that of ATP synthase subunit b 1 from Rhodopseudomonas palustris (strain HaA2).